Reading from the N-terminus, the 532-residue chain is MDQFGDILEGEVDHSFFDSDFEEGKKCETNSVFDKQNDDPKERIDKDTKNVNSNTGMQTTENYLTEKGNERNVKFPPEHPVENDVTQTVSSFSLPASSRSKKLCDVTTGLKIHVSIPNRIPKIVKEGEDDYYTDGEESSDDGKKYHVKSKSAKPSTNVKKSIRKKYCKVSSSSSSSLSSSSSGSGTDCLDAGSDSHLSDSSPSSKSSKKHVSGITLLSPKHKYKSGIKSTETQPSSTTPKCGHYPEESEDTVTDVSPLSTPDISPLQSFELGIANDQKVKIKKQENVSQEIYEDVEDLKNNSKYLKAAKKGKEKHEPDVSSKSSSVLDSSLDHRHKQKVLHDTMDLNHLLKAFLQLDKKGPQKHHFDQPSVAPGKNYSFTREEVRQIDRENQRLLKELSRQAEKPGSKSTIPRSADHPPKLYHSALNRQKEQQRIERENLALLKRLEAVKPTVGMKRSEQLMDYHRNMGYLNSSPLSRRARSTLGQYSPLRASRTSSATSGLSCRSERSAVDPSSGHPRRRPKPPNVRTAWL.

Serine 19 is subject to Phosphoserine. 5 disordered regions span residues 28-83 (ETNS…PVEN), 116-263 (IPNR…TPDI), 306-333 (KAAKKGKEKHEPDVSSKSSSVLDSSLDH), 398-421 (LSRQAEKPGSKSTIPRSADHPPKL), and 485-532 (GQYS…TAWL). The span at 35 to 49 (KQNDDPKERIDKDTK) shows a compositional bias: basic and acidic residues. Positions 50–63 (NVNSNTGMQTTENY) are enriched in polar residues. Positions 67 to 82 (KGNERNVKFPPEHPVE) are enriched in basic and acidic residues. The segment covering 127–139 (GEDDYYTDGEESS) has biased composition (acidic residues). Threonine 133 is modified (phosphothreonine). Residues serine 138 and serine 139 each carry the phosphoserine modification. 2 stretches are compositionally biased toward low complexity: residues 170 to 185 (SSSSSSSLSSSSSGSG) and 194 to 205 (DSHLSDSSPSSK). Serine 218 is subject to Phosphoserine. Over residues 227–239 (IKSTETQPSSTTP) the composition is skewed to polar residues. Residue serine 248 is modified to Phosphoserine. Polar residues predominate over residues 253–263 (TDVSPLSTPDI). The span at 320–329 (SSKSSSVLDS) shows a compositional bias: low complexity. Serine 330 is modified (phosphoserine). Positions 374–450 (GKNYSFTREE…ALLKRLEAVK (77 aa)) form a coiled coil. Polar residues predominate over residues 493–503 (SRTSSATSGLS).

The protein belongs to the CFAP97 family.

This is Cilia- and flagella-associated protein 97 from Homo sapiens (Human).